We begin with the raw amino-acid sequence, 274 residues long: Penicillin-insensitive murein endopeptidase (274 aa).

The N-terminal stretch at 1–19 is a signal peptide; that stretch reads MKKTVIALLAWFVSSASLA. 3 cysteine pairs are disulfide-bonded: C44–C265, C187–C235, and C216–C223. Residues H110, H113, D120, D147, H150, and H211 each coordinate Zn(2+). A disordered region spans residues 225 to 274; sequence DQPLPPPGDGCGAELQSWFEPPKPGTTKPEKKTPPPLPPSCQALLDEHVL.

It belongs to the peptidase M74 family. As to quaternary structure, dimer. The cofactor is Zn(2+).

Its subcellular location is the periplasm. Its function is as follows. Murein endopeptidase that cleaves the D-alanyl-meso-2,6-diamino-pimelyl amide bond that connects peptidoglycan strands. Likely plays a role in the removal of murein from the sacculus. In Salmonella paratyphi C (strain RKS4594), this protein is Penicillin-insensitive murein endopeptidase.